Reading from the N-terminus, the 647-residue chain is Acetyl-coenzyme A synthetase (647 aa).

CoA-binding positions include 190 to 193 (RGGK), Thr-310, and Asn-334. Residues 386-388 (GEP), 410-415 (DTWWQT), Asp-499, and Arg-514 each bind ATP. Ser-522 is a binding site for CoA. Arg-525 serves as a coordination point for ATP. Positions 536, 538, and 541 each coordinate Mg(2+). Residue Arg-583 participates in CoA binding. Lys-608 is subject to N6-acetyllysine.

It belongs to the ATP-dependent AMP-binding enzyme family. It depends on Mg(2+) as a cofactor. Post-translationally, acetylated. Deacetylation by the SIR2-homolog deacetylase activates the enzyme.

The catalysed reaction is acetate + ATP + CoA = acetyl-CoA + AMP + diphosphate. Catalyzes the conversion of acetate into acetyl-CoA (AcCoA), an essential intermediate at the junction of anabolic and catabolic pathways. AcsA undergoes a two-step reaction. In the first half reaction, AcsA combines acetate with ATP to form acetyl-adenylate (AcAMP) intermediate. In the second half reaction, it can then transfer the acetyl group from AcAMP to the sulfhydryl group of CoA, forming the product AcCoA. This chain is Acetyl-coenzyme A synthetase, found in Xanthomonas oryzae pv. oryzae (strain MAFF 311018).